We begin with the raw amino-acid sequence, 423 residues long: Glutamyl-tRNA reductase 2 (423 aa).

Substrate-binding positions include 48-51, Ser-103, 108-110, and Gln-114; these read TCYR and EPQ. Cys-49 (nucleophile) is an active-site residue. Position 183-188 (183-188) interacts with NADP(+); that stretch reads GAGEMA.

This sequence belongs to the glutamyl-tRNA reductase family. Homodimer.

It carries out the reaction (S)-4-amino-5-oxopentanoate + tRNA(Glu) + NADP(+) = L-glutamyl-tRNA(Glu) + NADPH + H(+). The protein operates within porphyrin-containing compound metabolism; protoporphyrin-IX biosynthesis; 5-aminolevulinate from L-glutamyl-tRNA(Glu): step 1/2. In terms of biological role, catalyzes the NADPH-dependent reduction of glutamyl-tRNA(Glu) to glutamate 1-semialdehyde (GSA). The protein is Glutamyl-tRNA reductase 2 of Anaeromyxobacter sp. (strain Fw109-5).